The primary structure comprises 142 residues: UPF0305 protein MK0666 (142 aa).

It belongs to the UPF0305 family.

The polypeptide is UPF0305 protein MK0666 (Methanopyrus kandleri (strain AV19 / DSM 6324 / JCM 9639 / NBRC 100938)).